A 506-amino-acid chain; its full sequence is Maturase K (506 aa).

The protein belongs to the intron maturase 2 family. MatK subfamily.

Its subcellular location is the plastid. The protein localises to the chloroplast. Its function is as follows. Usually encoded in the trnK tRNA gene intron. Probably assists in splicing its own and other chloroplast group II introns. This chain is Maturase K, found in Jasminum nudiflorum (Winter jasmine).